A 490-amino-acid polypeptide reads, in one-letter code: GTPase Der (490 aa).

EngA-type G domains are found at residues 3 to 166 and 203 to 376; these read PVVA…MEDL and IKLA…DSST. Residues 9-16, 56-60, 118-121, 209-216, 256-260, and 321-324 each bind GTP; these read GRPNVGKS, DTGGI, NKTD, DTAGV, and NKWD. Positions 377-461 constitute a KH-like domain; the sequence is RRVGTSMLTR…PIRIQFKEGE (85 aa).

This sequence belongs to the TRAFAC class TrmE-Era-EngA-EngB-Septin-like GTPase superfamily. EngA (Der) GTPase family. In terms of assembly, associates with the 50S ribosomal subunit.

In terms of biological role, GTPase that plays an essential role in the late steps of ribosome biogenesis. The chain is GTPase Der from Escherichia coli O81 (strain ED1a).